We begin with the raw amino-acid sequence, 74 residues long: Large ribosomal subunit protein bL31 (74 aa).

Cysteine 17, cysteine 19, cysteine 38, and cysteine 41 together coordinate Zn(2+).

Belongs to the bacterial ribosomal protein bL31 family. Type A subfamily. Part of the 50S ribosomal subunit. Requires Zn(2+) as cofactor.

Binds the 23S rRNA. In Gloeobacter violaceus (strain ATCC 29082 / PCC 7421), this protein is Large ribosomal subunit protein bL31.